Reading from the N-terminus, the 280-residue chain is Nucleotide-binding protein Mfla_0145 (280 aa).

Residue 8–15 (GLSGSGKS) coordinates ATP. 57–60 (DTRS) contacts GTP.

Belongs to the RapZ-like family.

In terms of biological role, displays ATPase and GTPase activities. The chain is Nucleotide-binding protein Mfla_0145 from Methylobacillus flagellatus (strain ATCC 51484 / DSM 6875 / VKM B-1610 / KT).